The chain runs to 691 residues: 1,4-alpha-glucan-branching enzyme (691 aa).

Residues tryptophan 80 and lysine 116 each coordinate (1,4-alpha-D-glucosyl)n. Catalysis depends on aspartate 333, which acts as the Nucleophile. Residue glutamate 398 is the Proton donor of the active site.

The protein belongs to the glycosyl hydrolase 13 family. GlgB subfamily.

The protein resides in the cytoplasm. The catalysed reaction is Transfers a segment of a (1-&gt;4)-alpha-D-glucan chain to a primary hydroxy group in a similar glucan chain.. It functions in the pathway glycan biosynthesis; glycogen biosynthesis. Its function is as follows. Glycogen-branching enzyme participates in the glycogen biosynthetic process along with glycogenin and glycogen synthase. Generates alpha-1,6-glucosidic branches from alpha-1,4-linked glucose chains, to increase solubility of the glycogen polymer. The sequence is that of 1,4-alpha-glucan-branching enzyme (GLC3) from Yarrowia lipolytica (strain CLIB 122 / E 150) (Yeast).